We begin with the raw amino-acid sequence, 259 residues long: Phosphatidylglycerol--prolipoprotein diacylglyceryl transferase (259 aa).

4 helical membrane passes run 9 to 29 (IIFY…VVGI), 55 to 75 (FITY…VLLY), 92 to 112 (EGGM…YLFC), and 117 to 137 (VNFL…LFLG). A 1,2-diacyl-sn-glycero-3-phospho-(1'-sn-glycerol) is bound at residue arginine 138. 3 helical membrane passes run 172–192 (QLYE…YATF), 201–221 (GLNS…IEIF), and 228–248 (IGFI…MLIL).

This sequence belongs to the Lgt family.

The protein localises to the cell inner membrane. The enzyme catalyses L-cysteinyl-[prolipoprotein] + a 1,2-diacyl-sn-glycero-3-phospho-(1'-sn-glycerol) = an S-1,2-diacyl-sn-glyceryl-L-cysteinyl-[prolipoprotein] + sn-glycerol 1-phosphate + H(+). The protein operates within protein modification; lipoprotein biosynthesis (diacylglyceryl transfer). In terms of biological role, catalyzes the transfer of the diacylglyceryl group from phosphatidylglycerol to the sulfhydryl group of the N-terminal cysteine of a prolipoprotein, the first step in the formation of mature lipoproteins. The chain is Phosphatidylglycerol--prolipoprotein diacylglyceryl transferase from Rickettsia akari (strain Hartford).